A 446-amino-acid polypeptide reads, in one-letter code: Exodeoxyribonuclease 7 large subunit (446 aa).

It belongs to the XseA family. Heterooligomer composed of large and small subunits.

It localises to the cytoplasm. The enzyme catalyses Exonucleolytic cleavage in either 5'- to 3'- or 3'- to 5'-direction to yield nucleoside 5'-phosphates.. Bidirectionally degrades single-stranded DNA into large acid-insoluble oligonucleotides, which are then degraded further into small acid-soluble oligonucleotides. The sequence is that of Exodeoxyribonuclease 7 large subunit from Shewanella denitrificans (strain OS217 / ATCC BAA-1090 / DSM 15013).